The primary structure comprises 90 residues: Small ribosomal subunit protein bS20 (90 aa).

It belongs to the bacterial ribosomal protein bS20 family.

Its function is as follows. Binds directly to 16S ribosomal RNA. This Nautilia profundicola (strain ATCC BAA-1463 / DSM 18972 / AmH) protein is Small ribosomal subunit protein bS20.